The chain runs to 998 residues: Calcium-transporting ATPase 3, endoplasmic reticulum-type (998 aa).

Residues 1–48 (MEDAYARSVSEVLDFFGVDPTKGLSDSQVVHHSRLYGRNVLPEEKRTP) are Cytoplasmic-facing. A helical transmembrane segment spans residues 49–69 (FWKLVLKQFDDLLVKILIVAA). Over 70–89 (IVSFVLALANGETGLTAFLE) the chain is Lumenal. The chain crosses the membrane as a helical span at residues 90–109 (PFVILLILAANAAVGVITET). Over 110–250 (NAEKALEELR…DEATPLKKKL (141 aa)) the chain is Cytoplasmic. Residues 251 to 270 (DEFGSFLAKVIAGICVLVWV) traverse the membrane as a helical segment. The Lumenal segment spans residues 271–291 (VNIGHFSDPSHGGFFKGAIHY). Residues 292-309 (FKIAVALAVAAIPEGLPA) form a helical membrane-spanning segment. Residues Val300, Ala301, Ile303, and Glu305 each coordinate Ca(2+). Topologically, residues 310-746 (VVTTCLALGT…AEGRAIYNNT (437 aa)) are cytoplasmic. Asp347 serves as the catalytic 4-aspartylphosphate intermediate. Residues Asp692 and Asp696 each coordinate Mg(2+). A helical transmembrane segment spans residues 747–766 (KQFIRYMISSNIGEVVCIFV). Residues Asn757 and Glu760 each coordinate Ca(2+). Residues 767–776 (AAVLGIPDTL) are Lumenal-facing. Residues 777 to 797 (APVQLLWVNLVTDGLPATAIG) form a helical membrane-spanning segment. The Ca(2+) site is built by Asn785, Thr788, and Asp789. Residues 798–817 (FNKQDSDVMKAKPRKVGEAV) lie on the Cytoplasmic side of the membrane. A helical transmembrane segment spans residues 818–840 (VTGWLFFRYLVIGVYVGLATVAG). The Lumenal portion of the chain corresponds to 841-883 (FIWWFVYSDGGPKLTYSELMNFETCALRETTYPCSIFEDRHPS). The helical transmembrane segment at 884–903 (TVAMTVLVVVEMFNALNNLS) threads the bilayer. Glu894 contributes to the Ca(2+) binding site. The Cytoplasmic segment spans residues 904 to 916 (ENQSLLVITPRSN). A helical membrane pass occupies residues 917-935 (LWLVGSIILTMLLHVLILY). Over 936–950 (VHPLAVLFSVTPLSW) the chain is Lumenal. A helical transmembrane segment spans residues 951–971 (AEWTAVLYLSFPVIIIDELLK). At 972-998 (FLSRNTGMRFRFRLRKADLLPKDRRDK) the chain is on the cytoplasmic side.

It belongs to the cation transport ATPase (P-type) (TC 3.A.3) family. Type IIA subfamily. Expressed in root cap, in elongation and differentiation zones of roots, in vascular tissues of roots, leaves, floral pedicels and style, in leaves, including hydathodes and guard cells, in stamens, in petals, in sepals and in siliques.

It localises to the golgi apparatus membrane. It is found in the endosome membrane. The protein resides in the prevacuolar compartment membrane. It carries out the reaction Ca(2+)(in) + ATP + H2O = Ca(2+)(out) + ADP + phosphate + H(+). This magnesium-dependent enzyme catalyzes the hydrolysis of ATP coupled with the translocation of calcium from the cytosol to an endomembrane compartment. Involved in calcium-enhanced root growth, in tolerance to toxic levels of manganese and in secretory processes. Has a crucial role in manganese nutrition, but is not involved in transporting copper, iron or zinc. The chain is Calcium-transporting ATPase 3, endoplasmic reticulum-type from Arabidopsis thaliana (Mouse-ear cress).